A 1080-amino-acid chain; its full sequence is Histone deacetylase 4 (1080 aa).

3 disordered regions span residues Met-1–Val-25, Lys-132–Val-165, and Thr-205–Glu-312. Basic and acidic residues predominate over residues Lys-132–Glu-162. Residues Thr-205 to Tyr-224 are compositionally biased toward polar residues. Composition is skewed to basic and acidic residues over residues Asp-233–Ala-244 and Lys-258–Gly-273. Low complexity predominate over residues Ser-289 to Glu-312. A PxLPxI/L motif is present at residues Pro-348–Ile-353. 3 disordered regions span residues Lys-506 to Glu-527, Glu-558 to Gln-579, and Pro-622 to Pro-646. Basic and acidic residues predominate over residues Glu-509–Glu-527. The span at Ile-560–Gln-571 shows a compositional bias: acidic residues. Residues Arg-625–Met-637 are compositionally biased toward polar residues. Residues Gly-651–Leu-1080 form a histone deacetylase region. Positions 663, 665, 671, and 747 each coordinate Zn(2+). His-799 is a catalytic residue. The tract at residues Met-1055–Leu-1080 is disordered.

The protein belongs to the histone deacetylase family. HD type 2 subfamily.

It localises to the nucleus. The enzyme catalyses N(6)-acetyl-L-lysyl-[histone] + H2O = L-lysyl-[histone] + acetate. Responsible for the deacetylation of lysine residues on the N-terminal part of the core histones (H2A, H2B, H3 and H4). Histone deacetylation gives a tag for epigenetic repression and plays an important role in transcriptional regulation, cell cycle progression and developmental events. Histone deacetylases act via the formation of large multiprotein complexes. This is Histone deacetylase 4 (HDAC4) from Gallus gallus (Chicken).